A 198-amino-acid polypeptide reads, in one-letter code: Angiopoietin-like protein 8 (198 aa).

Positions 1–15 are cleaved as a signal peptide; it reads MAVLALCLLWTLASA.

It belongs to the ANGPTL8 family. In terms of assembly, interacts with ANGPTL3. In terms of processing, proteolytically cleaved at the N-terminus. Expressed in liver and fat. Enriched in white and brown adipose tissues.

The protein localises to the secreted. Its function is as follows. Hormone that acts as a blood lipid regulator by regulating serum triglyceride levels. May be involved in the metabolic transition between fasting and refeeding: required to direct fatty acids to adipose tissue for storage in the fed state. According to a report, may act by promoting ANGPTL3 cleavage. According to another study, not required for cleavage of ANGPTL3. In Mus musculus (Mouse), this protein is Angiopoietin-like protein 8.